A 224-amino-acid chain; its full sequence is Artemin (224 aa).

The first 39 residues, 1–39, serve as a signal peptide directing secretion; it reads MELGLGEPTALSHCLRPRWQPALWPTLAALALLSSVTEA. Positions 40–111 are excised as a propeptide; sequence SLDPMSRSPA…AALRGARAAR (72 aa). Residues 41–124 form a disordered region; that stretch reads LDPMSRSPAS…RSSRARATDA (84 aa). Pro residues predominate over residues 80–95; that stretch reads RPPPQSPQPAPPPPGP. The span at 96-116 shows a compositional bias: low complexity; it reads ALQSPPAALRGARAARAGTRS. Cystine bridges form between Cys127–Cys192, Cys154–Cys220, and Cys158–Cys222. The N-linked (GlcNAc...) asparagine glycan is linked to Asn206.

This sequence belongs to the TGF-beta family. GDNF subfamily. As to quaternary structure, homodimer; disulfide-linked. Interacts with GFRA3 coreceptor and RET: forms a 2:2:2 ternary complex composed of ARTN ligand, GFRA3 and RET receptor. As to expression, cochlea. Expressed at higher level in sesorineural epithelium than in the modiolus region or substantia nigra.

It localises to the secreted. Growth factor that supports the survival of sensory and sympathetic peripheral neurons in culture and also supports the survival of dopaminergic neurons of the ventral mid-brain. Acts by binding to its coreceptor, GFRA3, leading to autophosphorylation and activation of the RET receptor. Strong attractant of gut hematopoietic cells thus promoting the formation Peyer's patch-like structures, a major component of the gut-associated lymphoid tissue. The chain is Artemin (Artn) from Rattus norvegicus (Rat).